We begin with the raw amino-acid sequence, 280 residues long: Pantothenate synthetase (280 aa).

30–37 (MGALHEGH) contacts ATP. H37 (proton donor) is an active-site residue. Q61 contributes to the (R)-pantoate binding site. Q61 contacts beta-alanine. An ATP-binding site is contributed by 147–150 (GQKD). Q153 is a (R)-pantoate binding site. ATP is bound by residues V176 and 184 to 187 (MSSR).

It belongs to the pantothenate synthetase family. In terms of assembly, homodimer.

Its subcellular location is the cytoplasm. The enzyme catalyses (R)-pantoate + beta-alanine + ATP = (R)-pantothenate + AMP + diphosphate + H(+). The protein operates within cofactor biosynthesis; (R)-pantothenate biosynthesis; (R)-pantothenate from (R)-pantoate and beta-alanine: step 1/1. Its function is as follows. Catalyzes the condensation of pantoate with beta-alanine in an ATP-dependent reaction via a pantoyl-adenylate intermediate. This is Pantothenate synthetase from Thermodesulfovibrio yellowstonii (strain ATCC 51303 / DSM 11347 / YP87).